The sequence spans 238 residues: ATP synthase subunit a (238 aa).

The next 5 membrane-spanning stretches (helical) occupy residues 18–38 (LTLLAVCIVTIAIVFAFVFWA), 76–96 (YSLLLFTIFLFVAVANNLGLF), 114–134 (NLAFDLALSLFITLMVHIEGV), 166–186 (SLAIRLFGNIFAGEVVTGLIV), and 193–213 (VYWWPIAFLVNMAWTAFSVFI).

This sequence belongs to the ATPase A chain family. F-type ATPases have 2 components, CF(1) - the catalytic core - and CF(0) - the membrane proton channel. CF(1) has five subunits: alpha(3), beta(3), gamma(1), delta(1), epsilon(1). CF(0) has three main subunits: a(1), b(2) and c(9-12). The alpha and beta chains form an alternating ring which encloses part of the gamma chain. CF(1) is attached to CF(0) by a central stalk formed by the gamma and epsilon chains, while a peripheral stalk is formed by the delta and b chains.

It is found in the cell membrane. In terms of biological role, key component of the proton channel; it plays a direct role in the translocation of protons across the membrane. The protein is ATP synthase subunit a of Streptococcus pyogenes serotype M1.